We begin with the raw amino-acid sequence, 288 residues long: tRNA dimethylallyltransferase (288 aa).

17-24 (GPTASGKT) is an ATP binding site. 19-24 (TASGKT) contributes to the substrate binding site.

Belongs to the IPP transferase family. Monomer. It depends on Mg(2+) as a cofactor.

It catalyses the reaction adenosine(37) in tRNA + dimethylallyl diphosphate = N(6)-dimethylallyladenosine(37) in tRNA + diphosphate. Catalyzes the transfer of a dimethylallyl group onto the adenine at position 37 in tRNAs that read codons beginning with uridine, leading to the formation of N6-(dimethylallyl)adenosine (i(6)A). The protein is tRNA dimethylallyltransferase of Jannaschia sp. (strain CCS1).